The primary structure comprises 155 residues: MAKGEGHILAQNKKARHDYHIVETVEAGIVLTGTEIKSVRAARIQLKDGFAQIKNGEAWLVNVHIAPFEQGNIWNADPERTRKLLLKKREITHLANELKGTGMTLVPLKVYLKDGFAKVLIGLAKGKHDYDKRETIKRRDQERDIKKQMKHYNAR.

This sequence belongs to the SmpB family.

The protein resides in the cytoplasm. Required for rescue of stalled ribosomes mediated by trans-translation. Binds to transfer-messenger RNA (tmRNA), required for stable association of tmRNA with ribosomes. tmRNA and SmpB together mimic tRNA shape, replacing the anticodon stem-loop with SmpB. tmRNA is encoded by the ssrA gene; the 2 termini fold to resemble tRNA(Ala) and it encodes a 'tag peptide', a short internal open reading frame. During trans-translation Ala-aminoacylated tmRNA acts like a tRNA, entering the A-site of stalled ribosomes, displacing the stalled mRNA. The ribosome then switches to translate the ORF on the tmRNA; the nascent peptide is terminated with the 'tag peptide' encoded by the tmRNA and targeted for degradation. The ribosome is freed to recommence translation, which seems to be the essential function of trans-translation. In Streptococcus pyogenes serotype M4 (strain MGAS10750), this protein is SsrA-binding protein.